Consider the following 360-residue polypeptide: Peptide chain release factor 1 (360 aa).

The residue at position 237 (Gln237) is an N5-methylglutamine.

The protein belongs to the prokaryotic/mitochondrial release factor family. Post-translationally, methylated by PrmC. Methylation increases the termination efficiency of RF1.

The protein localises to the cytoplasm. Peptide chain release factor 1 directs the termination of translation in response to the peptide chain termination codons UAG and UAA. This chain is Peptide chain release factor 1, found in Pseudomonas aeruginosa (strain LESB58).